A 682-amino-acid chain; its full sequence is DNA ligase (682 aa).

NAD(+)-binding positions include 42 to 46 (DAAYD), 88 to 89 (SL), and Glu-121. The active-site N6-AMP-lysine intermediate is Lys-123. Residues Arg-144, Glu-180, Lys-291, and Lys-315 each coordinate NAD(+). Positions 409, 412, 427, and 433 each coordinate Zn(2+). The BRCT domain occupies 601–682 (AAGGALAGKT…FRSLAGLPPG (82 aa)).

Belongs to the NAD-dependent DNA ligase family. LigA subfamily. Requires Mg(2+) as cofactor. Mn(2+) is required as a cofactor.

It catalyses the reaction NAD(+) + (deoxyribonucleotide)n-3'-hydroxyl + 5'-phospho-(deoxyribonucleotide)m = (deoxyribonucleotide)n+m + AMP + beta-nicotinamide D-nucleotide.. In terms of biological role, DNA ligase that catalyzes the formation of phosphodiester linkages between 5'-phosphoryl and 3'-hydroxyl groups in double-stranded DNA using NAD as a coenzyme and as the energy source for the reaction. It is essential for DNA replication and repair of damaged DNA. The protein is DNA ligase of Acidiphilium cryptum (strain JF-5).